Reading from the N-terminus, the 292-residue chain is E3 ubiquitin-protein ligase trim-21 (292 aa).

The RING-type zinc finger occupies Cys-6–Arg-52. The segment at Asn-90–Leu-137 adopts a B box-type zinc-finger fold. Cys-95, His-98, Cys-123, and His-129 together coordinate Zn(2+). A coiled-coil region spans residues Ile-152–Leu-179.

The protein belongs to the TRIM/RBCC family. In terms of assembly, interacts with E2 ubiquitin-conjugating enzyme ubc-21. Interacts with ced-6; this mediates interaction of trim-21 with ced-1 and is required for ced-1 ubiquitination. Interacts with nck-1; the interaction is required for ced-1 ubiquitination. As to expression, in early larva, observed mainly in pharyngeal and body wall muscle cells.

Its subcellular location is the cytoplasm. The catalysed reaction is S-ubiquitinyl-[E2 ubiquitin-conjugating enzyme]-L-cysteine + [acceptor protein]-L-lysine = [E2 ubiquitin-conjugating enzyme]-L-cysteine + N(6)-ubiquitinyl-[acceptor protein]-L-lysine.. The protein operates within protein modification; protein ubiquitination. E3 ubiquitin-protein ligase which catalyzes 'Lys-48'-linked polyubiquitination of ced-1, promoting its proteasomal degradation to maintain appropriate ced-1 levels for apoptotic cell clearance. Acts together with E2 ubiquitin-conjugating enzyme ubc-21. This chain is E3 ubiquitin-protein ligase trim-21, found in Caenorhabditis elegans.